Consider the following 450-residue polypeptide: Phosphoglucosamine mutase (450 aa).

The active-site Phosphoserine intermediate is the Ser101. Mg(2+) contacts are provided by Ser101, Asp241, Asp243, and Asp245. Ser101 bears the Phosphoserine mark.

This sequence belongs to the phosphohexose mutase family. The cofactor is Mg(2+). Post-translationally, activated by phosphorylation.

The enzyme catalyses alpha-D-glucosamine 1-phosphate = D-glucosamine 6-phosphate. Catalyzes the conversion of glucosamine-6-phosphate to glucosamine-1-phosphate. This Listeria innocua serovar 6a (strain ATCC BAA-680 / CLIP 11262) protein is Phosphoglucosamine mutase.